The chain runs to 405 residues: Envelope glycoprotein M (405 aa).

Topologically, residues 1–17 are intravirion; sequence MKSSKNDTFVYRTWFKT. The chain crosses the membrane as a helical span at residues 18–38; it reads LVVYFVMFVMSAVVPITAMFP. Topologically, residues 39–76 are virion surface; the sequence is NLGYPCYFNALVDYGALNLTNYNLAHHLTPTLYLEPPE. Residues 77-97 traverse the membrane as a helical segment; the sequence is MFVYITLVFIADCVAFIYYAC. The Intravirion portion of the chain corresponds to 98 to 121; sequence GEVALIKARKKVSGLTDLSAWVSA. The chain crosses the membrane as a helical span at residues 122 to 142; it reads VGSPTVLFLAILKLWSIQVFI. The Virion surface portion of the chain corresponds to 143 to 149; sequence QVLSYKH. The helical transmembrane segment at 150–170 threads the bilayer; sequence VFLSAFVYFLHFLASVLHACA. Residues 171-192 lie on the Intravirion side of the membrane; the sequence is CVTRFSPVWVVKAQDNSIPQDT. Residues 193–215 traverse the membrane as a helical segment; it reads FLWWVVFYLKPIVTNLYLGCLAL. Over 216-245 the chain is Virion surface; sequence ETLVFSLSVFLALGNSFYFMVGDMVLGAVN. A helical transmembrane segment spans residues 246–266; that stretch reads LFLVLPIFWYILTEVWLASFL. A topological domain (intravirion) is located at residue Arg267. The chain crosses the membrane as a helical span at residues 268–288; that stretch reads HNFGFYCGMFIASIILILPLV. Topologically, residues 289–299 are virion surface; the sequence is RYEAVFVSAKL. A helical transmembrane segment spans residues 300 to 320; that stretch reads HTTVAINVAIIPILCSVAMLI. Topologically, residues 321–405 are intravirion; sequence RICRIFKSMR…TTDSEEEIFP (85 aa). Positions 346–405 are disordered; sequence LESEPRPRPSRTPSPGRNRRRSSTSSSSSRSTRRQRPVSTQALISSVLPMTTDSEEEIFP. The span at 386-397 shows a compositional bias: polar residues; sequence QALISSVLPMTT.

This sequence belongs to the herpesviridae glycoprotein M family. In terms of assembly, interacts (via N-terminus) with gN (via N-terminus). The gM-gN heterodimer forms the gCII complex.

Its subcellular location is the virion membrane. It localises to the host Golgi apparatus. The protein localises to the host trans-Golgi network. The protein resides in the host endosome membrane. It is found in the host nucleus inner membrane. Functionally, envelope glycoprotein important for virion assembly and egress. Plays a role in the correct incorporation of gH-gL into virion membrane. Directs the glycoprotein N (gN) to the host trans-Golgi network. The sequence is that of Envelope glycoprotein M from Homo sapiens (Human).